The chain runs to 399 residues: MAAVRLKEVRMAQRAEGLATVLAIGTAVPANCVYQATYPDYYFRVTKSEHLADLKEKFQRMCDKSMIRKRHMHLTEEILIKNPKICAHMETSLDARHAIALVEVPKLGQGAAEKAIKEWGQPLSKITHLVFCTTSGVDMPGADYQLTKLLGLSPTVKRLMMYQQGCFGGATVLRLAKDIAENNRGARVLVVCSEITAMAFRGPCKSHLDSLVGHALFGDGAAAAIIGADPDQLDEQPVFQLVSASQTILPESEGAIDGHLTEAGLTIHLLKDVPGLISENIEQALEDAFEPLGIHNWNSIFWIAHPGGPAILDRVEDRVGLDKKRMRASREVLSEYGNMSSASVLFVLDVMRKSSAKDGLATTGEGKDWGVLFGFGPGLTVETLVLHSVPVPVPTAASA.

Cys166 is an active-site residue.

It belongs to the thiolase-like superfamily. Chalcone/stilbene synthases family.

It catalyses the reaction (E)-4-coumaroyl-CoA + 3 malonyl-CoA + 3 H(+) = 2',4,4',6'-tetrahydroxychalcone + 3 CO2 + 4 CoA. It functions in the pathway secondary metabolite biosynthesis; flavonoid biosynthesis. Its function is as follows. The primary product of this enzyme is 4,2',4',6'-tetrahydroxychalcone (also termed naringenin-chalcone or chalcone) which can under specific conditions spontaneously isomerize into naringenin. Substrate preference is feruloyl-CoA = caffeoyl-CoA &gt;&gt; cinnamoyl-CoA. This chain is Chalcone synthase 2 (CHS2), found in Hordeum vulgare (Barley).